The chain runs to 339 residues: Ribosomal RNA small subunit methyltransferase H (339 aa).

Residues 36-38, Asp55, Phe82, Asp103, and Gln110 each bind S-adenosyl-L-methionine; that span reads GGY. The interval 286 to 319 is disordered; that stretch reads GPIGPSEAEATANPRARSAKLRAGERTDAPIPEP.

Belongs to the methyltransferase superfamily. RsmH family.

The protein localises to the cytoplasm. The enzyme catalyses cytidine(1402) in 16S rRNA + S-adenosyl-L-methionine = N(4)-methylcytidine(1402) in 16S rRNA + S-adenosyl-L-homocysteine + H(+). Functionally, specifically methylates the N4 position of cytidine in position 1402 (C1402) of 16S rRNA. This chain is Ribosomal RNA small subunit methyltransferase H, found in Methylobacterium nodulans (strain LMG 21967 / CNCM I-2342 / ORS 2060).